We begin with the raw amino-acid sequence, 360 residues long: Inward rectifier potassium channel 13 (360 aa).

Residues M1–D50 lie on the Cytoplasmic side of the membrane. A helical membrane pass occupies residues M51–A77. The Extracellular portion of the chain corresponds to V78–S105. Positions F106–Y122 form an intramembrane region, helical; Pore-forming. Positions T119–T124 match the Selectivity filter motif. Residues G123 to C131 are Extracellular-facing. The helical transmembrane segment at P132–V157 threads the bilayer. The Cytoplasmic segment spans residues A158–E360. The residue at position 287 (S287) is a Phosphoserine; by PKA.

The protein belongs to the inward rectifier-type potassium channel (TC 1.A.2.1) family. KCNJ13 subfamily. As to quaternary structure, homotetramer. Interacts with RAB28; the interaction may facilitate cone outer segments phagocytosis. In terms of processing, phosphorylation at Ser-287 by PKA increases ionic currents. As to expression, expressed in retina.

It localises to the membrane. The protein resides in the cell membrane. It catalyses the reaction K(+)(in) = K(+)(out). Inhibited by Ba(2+) and Cs(+), although sensitivity to those inhibitors is much lower than in other Kir channels. Functionally, inward rectifier potassium channels are characterized by a greater tendency to allow potassium to flow into the cell rather than out of it. Their voltage dependence is regulated by the concentration of extracellular potassium; as external potassium is raised, the voltage range of the channel opening shifts to more positive voltages. The inward rectification is mainly due to the blockage of outward current by internal magnesium. KCNJ13 has a very low single channel conductance, low sensitivity to block by external barium and cesium, and no dependence of its inward rectification properties on the internal blocking particle magnesium. The polypeptide is Inward rectifier potassium channel 13 (Mus musculus (Mouse)).